Consider the following 320-residue polypeptide: Olfactory receptor 51E2 (320 aa).

Topologically, residues 1–24 (MSSCNFTHATFVLIGIPGLEKAHF) are extracellular. Asparagine 5 carries an N-linked (GlcNAc...) asparagine glycan. Residues 25-45 (WVGFPLLSMYVVAMFGNCIVV) traverse the membrane as a helical segment. Residues 46–53 (FIVRTERS) are Cytoplasmic-facing. Residues 54–74 (LHAPMYLFLCMLAAIDLALST) traverse the membrane as a helical segment. The Extracellular portion of the chain corresponds to 75 to 98 (STMPKILALFWFDSREISFEACLT). Cysteine 96 and cysteine 178 form a disulfide bridge. A helical transmembrane segment spans residues 99–119 (QMFFIHALSAIESTILLAMAF). At 120-138 (DRYVAICHPLRHAAVLNNT) the chain is on the cytoplasmic side. The chain crosses the membrane as a helical span at residues 139 to 159 (VTAQIGIVAVVRGSLFFFPLP). Topologically, residues 160-195 (LLIKRLAFCHSNVLSHSYCVHQDVMKLAYADTLPNV) are extracellular. The helical transmembrane segment at 196–216 (VYGLTAILLVMGVDVMFISLS) threads the bilayer. Over 217-236 (YFLIIRTVLQLPSKSERAKA) the chain is Cytoplasmic. A helical transmembrane segment spans residues 237-257 (FGTCVSHIGVVLAFYVPLIGL). At 258–272 (SVVHRFGNSLHPIVR) the chain is on the extracellular side. Residues 273–293 (VVMGDIYLLLPPVINPIIYGA) form a helical membrane-spanning segment. Over 294 to 320 (KTKQIRTRVLAMFKISCDKDLQAVGGK) the chain is Cytoplasmic.

It belongs to the G-protein coupled receptor 1 family. In terms of tissue distribution, highly expressed in the prostate. Also expressed in spleen, liver, olfactory epithelium, retinal pigment epithelium and medulla oblongata. In the retinal pigment epithelium expression is restricted to the pigment cells and choroid (at protein level). Expressed in epidermal melanocytes (at protein level).

It localises to the cell membrane. Its subcellular location is the early endosome membrane. In terms of biological role, olfactory receptor. Activated by the odorant, beta-ionone, a synthetic terpenoid. The activity of this receptor is probably mediated by G-proteins leading to the elevation of intracellular Ca(2+), cAMP and activation of the protein kinases PKA and MAPK3/MAPK1. Stimulation of OR51E2 by beta-ionone affects melanocyte proliferation, differentiation, and melanogenesis. Activation of OR51E2 by beta-ionone increases proliferation and migration of primary retinal pigment epithelial (RPE) cells. Activated also by the short-chain fatty acids (SCFA) acetate and propionate. In response to SCFA, may positively regulate renin secretion and increase blood pressure. May also be activated by steroid hormones and regulate cell proliferation. Activated by L-lactate in glomus cells. The protein is Olfactory receptor 51E2 of Homo sapiens (Human).